A 274-amino-acid chain; its full sequence is Large ribosomal subunit protein uL2 (274 aa).

Disordered regions lie at residues 28–53 (KPYA…TVRH) and 223–274 (VAMN…RRTK). Positions 39-48 (KSGGRNNNGR) are enriched in low complexity. Residues 254–274 (KGAKTRKNKRTDKFIVRRRTK) show a composition bias toward basic residues.

It belongs to the universal ribosomal protein uL2 family. Part of the 50S ribosomal subunit. Forms a bridge to the 30S subunit in the 70S ribosome.

Its function is as follows. One of the primary rRNA binding proteins. Required for association of the 30S and 50S subunits to form the 70S ribosome, for tRNA binding and peptide bond formation. It has been suggested to have peptidyltransferase activity; this is somewhat controversial. Makes several contacts with the 16S rRNA in the 70S ribosome. This is Large ribosomal subunit protein uL2 from Pseudoalteromonas translucida (strain TAC 125).